We begin with the raw amino-acid sequence, 121 residues long: MARIAGINIPPHQHAEIGLTAIFGIGRTRARKICEACGIAYSKKIKDLTDGDLEKIRDQIAQFTIEGDLRRETTMNIKRLMDIGCYRGFRHRRGLPMRGQRTRTNARTRKGPRKGAAALKK.

Positions 93-121 (RGLPMRGQRTRTNARTRKGPRKGAAALKK) are disordered.

The protein belongs to the universal ribosomal protein uS13 family. In terms of assembly, part of the 30S ribosomal subunit. Forms a loose heterodimer with protein S19. Forms two bridges to the 50S subunit in the 70S ribosome.

Its function is as follows. Located at the top of the head of the 30S subunit, it contacts several helices of the 16S rRNA. In the 70S ribosome it contacts the 23S rRNA (bridge B1a) and protein L5 of the 50S subunit (bridge B1b), connecting the 2 subunits; these bridges are implicated in subunit movement. Contacts the tRNAs in the A and P-sites. This is Small ribosomal subunit protein uS13 from Paracidovorax citrulli (strain AAC00-1) (Acidovorax citrulli).